A 295-amino-acid polypeptide reads, in one-letter code: tRNA dimethylallyltransferase (295 aa).

9–16 lines the ATP pocket; sequence GATATGKS. 11-16 provides a ligand contact to substrate; it reads TATGKS. The interval 34-37 is interaction with substrate tRNA; that stretch reads DSRQ.

It belongs to the IPP transferase family. In terms of assembly, monomer. The cofactor is Mg(2+).

It carries out the reaction adenosine(37) in tRNA + dimethylallyl diphosphate = N(6)-dimethylallyladenosine(37) in tRNA + diphosphate. In terms of biological role, catalyzes the transfer of a dimethylallyl group onto the adenine at position 37 in tRNAs that read codons beginning with uridine, leading to the formation of N6-(dimethylallyl)adenosine (i(6)A). This is tRNA dimethylallyltransferase from Nostoc sp. (strain PCC 7120 / SAG 25.82 / UTEX 2576).